Consider the following 349-residue polypeptide: Dihydroorotate dehydrogenase (quinone) (349 aa).

FMN contacts are provided by residues 67–71 and Thr-91; that span reads AGLDK. Lys-71 contributes to the substrate binding site. Residue 116–120 participates in substrate binding; sequence NRLGF. FMN is bound by residues Asn-147 and Asn-180. Substrate is bound at residue Asn-180. Ser-183 acts as the Nucleophile in catalysis. Asn-185 provides a ligand contact to substrate. FMN is bound by residues Lys-225 and Thr-253. Residue 254 to 255 participates in substrate binding; sequence NT. Residues Gly-276, Gly-305, and 326 to 327 contribute to the FMN site; that span reads YT.

The protein belongs to the dihydroorotate dehydrogenase family. Type 2 subfamily. As to quaternary structure, monomer. FMN is required as a cofactor.

It localises to the cell membrane. It catalyses the reaction (S)-dihydroorotate + a quinone = orotate + a quinol. It participates in pyrimidine metabolism; UMP biosynthesis via de novo pathway; orotate from (S)-dihydroorotate (quinone route): step 1/1. In terms of biological role, catalyzes the conversion of dihydroorotate to orotate with quinone as electron acceptor. The protein is Dihydroorotate dehydrogenase (quinone) of Bordetella pertussis (strain Tohama I / ATCC BAA-589 / NCTC 13251).